Consider the following 90-residue polypeptide: Putative UPF0401 protein YpjI (90 aa).

This sequence belongs to the UPF0401 family.

The protein is Putative UPF0401 protein YpjI (ypjI) of Escherichia coli (strain K12).